Here is a 233-residue protein sequence, read N- to C-terminus: Large ribosomal subunit protein uL2 (233 aa).

A disordered region spans residues 195 to 233 (PHGGGNHQHVGRPSTVGRNAPPGRKVGRLSPKRRRVNGR). Over residues 219–233 (KVGRLSPKRRRVNGR) the composition is skewed to basic residues.

This sequence belongs to the universal ribosomal protein uL2 family. In terms of assembly, part of the 50S ribosomal subunit. Forms a bridge to the 30S subunit in the 70S ribosome.

One of the primary rRNA binding proteins. Required for association of the 30S and 50S subunits to form the 70S ribosome, for tRNA binding and peptide bond formation. It has been suggested to have peptidyltransferase activity; this is somewhat controversial. Makes several contacts with the 16S rRNA in the 70S ribosome. In Thermoplasma acidophilum (strain ATCC 25905 / DSM 1728 / JCM 9062 / NBRC 15155 / AMRC-C165), this protein is Large ribosomal subunit protein uL2.